A 284-amino-acid polypeptide reads, in one-letter code: Acetylglutamate kinase (284 aa).

Substrate-binding positions include Gly-64–Gly-65, Arg-86, and Asn-179.

It belongs to the acetylglutamate kinase family. ArgB subfamily.

It localises to the cytoplasm. It carries out the reaction N-acetyl-L-glutamate + ATP = N-acetyl-L-glutamyl 5-phosphate + ADP. Its pathway is amino-acid biosynthesis; L-arginine biosynthesis; N(2)-acetyl-L-ornithine from L-glutamate: step 2/4. In terms of biological role, catalyzes the ATP-dependent phosphorylation of N-acetyl-L-glutamate. The chain is Acetylglutamate kinase from Acaryochloris marina (strain MBIC 11017).